The following is a 345-amino-acid chain: Histone H3-like centromeric protein cpar-1 (345 aa).

Residues 117 to 246 are disordered; sequence NHSNRKPLEE…SRVTKTHNRK (130 aa). Residues 122–149 are compositionally biased toward basic and acidic residues; the sequence is KPLEESRRREEPRDRVHESNIDITHRGD. The segment covering 233-246 has biased composition (basic residues); it reads RSGKSRVTKTHNRK. Residues 263 to 340 are H3-like; sequence STDMLIQKAP…TDIQLYRRLC (78 aa).

Belongs to the histone H3 family. Forms a nucleosome-like histone octamer containing two molecules each of H2A, H2B, cpar-1 and H4 assembled in one cpar-1-H4 heterotetramer and two H2A-H2B heterodimers. In terms of processing, cleaved at the onset of meiotic anaphase I, likely by separase sep-1.

The protein resides in the nucleus. It localises to the chromosome. Its function is as follows. Histone H3-like variant which exclusively replaces conventional H3 in the nucleosome core of centromeric chromatin at the inner plate of the kinetochore. Required for recruitment and assembly of kinetochore proteins, mitotic progression and chromosome segregation. May serve as an epigenetic mark that propagates centromere identity through replication and cell division. Not required for chromosome segregation during meiosis. This Caenorhabditis briggsae protein is Histone H3-like centromeric protein cpar-1.